The primary structure comprises 879 residues: Beta-mannosidase (879 aa).

Residues 1–17 (MLLRLLLLLAPCGAGFA) form the signal peptide. N-linked (GlcNAc...) asparagine glycans are attached at residues Asn35 and Asn77. Cys167 and Cys176 are joined by a disulfide. Residue 190 to 192 (WDW) coordinates substrate. 2 N-linked (GlcNAc...) asparagine glycosylation sites follow: Asn297 and Asn302. Position 456 (Asn456) interacts with substrate. Residue Glu457 is the Proton donor of the active site. 3 disulfide bridges follow: Cys540–Cys629, Cys732–Cys761, and Cys764–Cys769. The Nucleophile role is filled by Glu554. Asn607 carries N-linked (GlcNAc...) asparagine glycosylation. N-linked (GlcNAc...) asparagine glycosylation is present at Asn803.

The protein belongs to the glycosyl hydrolase 2 family. As to quaternary structure, monomer. The N-terminus is blocked. In terms of processing, N-glycosylated. Detected in kidney (at protein level). Highest expression is found in thyroid tissue. The amount of transcript is significantly higher in normal tissues than in tissues affected by the disease.

The protein localises to the lysosome. The enzyme catalyses Hydrolysis of terminal, non-reducing beta-D-mannose residues in beta-D-mannosides.. It functions in the pathway glycan metabolism; N-glycan degradation. Functionally, exoglycosidase that cleaves the single beta-linked mannose residue from the non-reducing end of all N-linked glycoprotein oligosaccharides. The chain is Beta-mannosidase (MANBA) from Bos taurus (Bovine).